The following is a 509-amino-acid chain: Transcription factor SOX-9 (509 aa).

2 disordered regions span residues 1 to 67 (MNLL…SEED) and 160 to 273 (RLRV…FRDV). Residues 30-41 (SAGSPCPSGSGS) are compositionally biased toward low complexity. The span at 42 to 52 (DTENTRPQENT) shows a compositional bias: polar residues. Composition is skewed to basic and acidic residues over residues 56-67 (GEPDLKKESEED) and 160-174 (RLRV…DYKY). The segment at 63–103 (ESEEDKFPVCIREAVSQVLKGYDWTLVPMPVRVNGSSKNKP) is dimerization (DIM). The interval 63–103 (ESEEDKFPVCIREAVSQVLKGYDWTLVPMPVRVNGSSKNKP) is PQA. Serine 64 is modified (phosphoserine). A DNA-binding region (HMG box) is located at residues 105–173 (VKRPMNAFMV…QHKKDHPDYK (69 aa)). Position 211 is a phosphoserine (serine 211). The segment at 224–307 (PGEHSGQSQG…LPPNGHPGVP (84 aa)) is transactivation domain (TAM). 2 consecutive short sequence motifs (9aaTAD) follow at residues 275 to 284 (IGELSSDVIS) and 290 to 298 (DVNEFDQYL). The disordered stretch occupies residues 330 to 415 (SAGHVWMSKQ…HYSEQQQHSP (86 aa)). The segment covering 341–376 (APPPPPQQPPQAPPAPQAPPQPQAAPPQQPAAPPQQ) has biased composition (pro residues). Positions 380–415 (HTLTTLSSEPGQSQRTHIKTEQLSPSHYSEQQQHSP) are enriched in polar residues. Positions 394–509 (RTHIKTEQLS…QPVYTQLTRP (116 aa)) are transactivation domain (TAC). A Glycyl lysine isopeptide (Lys-Gly) (interchain with G-Cter in ubiquitin) cross-link involves residue lysine 398. A 9aaTAD 3 motif is present at residues 460-468 (TGLYSTFTY). The disordered stretch occupies residues 479–509 (PIADTSGVPSIPQTHSPQHWEQPVYTQLTRP). Polar residues predominate over residues 485–509 (GVPSIPQTHSPQHWEQPVYTQLTRP).

As to quaternary structure, homodimer; homodimerization is required for activity. Interacts (via C-terminus) with ZNF219; forming a complex that binds to the COL2A1 promoter and activates COL2A1 expression. Interacts with DDRGK1. Interacts with EP300/p300. Interacts with beta-catenin (CTNNB1); inhibiting CTNNB1 activity by competing with the binding sites of TCF/LEF within CTNNB1. Acetylated; acetylation impairs nuclear localization and ability to transactivate expression of target genes. Deacetylated by SIRT1. In terms of processing, phosphorylation at Ser-64 and Ser-211 by PKA increases transcriptional activity and may help delay chondrocyte maturation downstream of PTHLH/PTHrP signaling. Phosphorylation at either Ser-64 or Ser-211 is required for sumoylation, but phosphorylation is not dependent on sumoylation. Phosphorylated on tyrosine residues; tyrosine dephosphorylation by PTPN11/SHP2 blocks SOX9 phosphorylation by PKA and subsequent SUMOylation. Post-translationally, ubiquitinated; ubiquitination leads to proteasomal degradation and is negatively regulated by DDRGK1. Sumoylated; phosphorylation at either Ser-64 or Ser-211 is required for sumoylation. Sumoylation is induced by BMP signaling pathway.

The protein localises to the nucleus. Transcription factor that plays a key role in chondrocytes differentiation and skeletal development. Specifically binds the 5'-ACAAAG-3' DNA motif present in enhancers and super-enhancers and promotes expression of genes important for chondrogenesis, including cartilage matrix protein-coding genes COL2A1, COL4A2, COL9A1, COL11A2 and ACAN, SOX5 and SOX6. Also binds to some promoter regions. Plays a central role in successive steps of chondrocyte differentiation. Absolutely required for precartilaginous condensation, the first step in chondrogenesis during which skeletal progenitors differentiate into prechondrocytes. Together with SOX5 and SOX6, required for overt chondrogenesis when condensed prechondrocytes differentiate into early stage chondrocytes, the second step in chondrogenesis. Later, required to direct hypertrophic maturation and block osteoblast differentiation of growth plate chondrocytes: maintains chondrocyte columnar proliferation, delays prehypertrophy and then prevents osteoblastic differentiation of chondrocytes by lowering beta-catenin (CTNNB1) signaling and RUNX2 expression. Also required for chondrocyte hypertrophy, both indirectly, by keeping the lineage fate of chondrocytes, and directly, by remaining present in upper hypertrophic cells and transactivating COL10A1 along with MEF2C. Low lipid levels are the main nutritional determinant for chondrogenic commitment of skeletal progenitor cells: when lipids levels are low, FOXO (FOXO1 and FOXO3) transcription factors promote expression of SOX9, which induces chondrogenic commitment and suppresses fatty acid oxidation. Mechanistically, helps, but is not required, to remove epigenetic signatures of transcriptional repression and deposit active promoter and enhancer marks at chondrocyte-specific genes. Acts in cooperation with the Hedgehog pathway-dependent GLI (GLI1 and GLI3) transcription factors. In addition to cartilage development, also acts as a regulator of proliferation and differentiation in epithelial stem/progenitor cells: involved in the lung epithelium during branching morphogenesis, by balancing proliferation and differentiation and regulating the extracellular matrix. Controls epithelial branching during kidney development. The sequence is that of Transcription factor SOX-9 from Homo sapiens (Human).